Here is a 227-residue protein sequence, read N- to C-terminus: UPF0173 metal-dependent hydrolase Oter_4201 (227 aa).

Belongs to the UPF0173 family.

The chain is UPF0173 metal-dependent hydrolase Oter_4201 from Opitutus terrae (strain DSM 11246 / JCM 15787 / PB90-1).